The sequence spans 29 residues: Glucagon (29 aa).

The protein belongs to the glucagon family.

The protein localises to the secreted. In terms of biological role, glucagon plays a key role in glucose metabolism and homeostasis. Regulates blood glucose by increasing gluconeogenesis and decreasing glycolysis. The sequence is that of Glucagon (GCG) from Meleagris gallopavo (Wild turkey).